We begin with the raw amino-acid sequence, 923 residues long: Leucine--tRNA ligase (923 aa).

The short motif at 41–52 (PYPSGEGLHVGH) is the 'HIGH' region element. The 'KMSKS' region signature appears at 698–702 (KMSKS). Lys701 is a binding site for ATP.

This sequence belongs to the class-I aminoacyl-tRNA synthetase family.

The protein resides in the cytoplasm. It catalyses the reaction tRNA(Leu) + L-leucine + ATP = L-leucyl-tRNA(Leu) + AMP + diphosphate. The chain is Leucine--tRNA ligase from Amoebophilus asiaticus (strain 5a2).